Reading from the N-terminus, the 858-residue chain is Heat shock protein 105 kDa (858 aa).

The residue at position 2 (Ser-2) is an N-acetylserine. Lys-471 is modified (N6-acetyllysine). Disordered stretches follow at residues 500–584 and 796–858; these read KVPT…PPEA and CEPV…MDLD. The span at 504–514 shows a compositional bias: acidic residues; sequence EENEMSSEADM. 2 positions are modified to phosphoserine: Ser-509 and Ser-510. Over residues 532-554 the composition is skewed to polar residues; it reads QQDNSEAGTQPQVQTDAQQTSQS. Ser-557 is subject to Phosphoserine. Thr-561 is subject to Phosphothreonine. 2 stretches are compositionally biased toward basic and acidic residues: residues 563-584 and 805-814; these read EENK…PPEA and PKIESPKLER. Position 809 is a phosphoserine (Ser-809). At Thr-815 the chain carries Phosphothreonine. Residues 821–832 show a composition bias toward basic and acidic residues; that stretch reads IDKKEEDLEDKN. Polar residues predominate over residues 849-858; it reads EKNSVNMDLD.

The protein belongs to the heat shock protein 70 family. In terms of assembly, interacts with HSPA8/HSC70. Interacts with HSPA1A (via NBD) and HSPA1B (via NBD). In terms of processing, phosphorylation on Ser-509 may be important for regulation of the HSPA8/HSC70 chaperone activity.

It localises to the cytoplasm. Its function is as follows. Acts as a nucleotide-exchange factor (NEF) for chaperone proteins HSPA1A and HSPA1B, promoting the release of ADP from HSPA1A/B thereby triggering substrate release. Prevents the aggregation of denatured proteins in cells under severe stress, on which the ATP levels decrease markedly. Inhibits HSPA8/HSC70 ATPase and chaperone activities. The polypeptide is Heat shock protein 105 kDa (HSPH1) (Pongo abelii (Sumatran orangutan)).